A 93-amino-acid polypeptide reads, in one-letter code: Acylphosphatase (93 aa).

Residues 5–93 (TAILRVTGFV…EERKTFDIVY (89 aa)) enclose the Acylphosphatase-like domain. Active-site residues include arginine 20 and asparagine 38.

Belongs to the acylphosphatase family.

It carries out the reaction an acyl phosphate + H2O = a carboxylate + phosphate + H(+). This chain is Acylphosphatase (acyP), found in Listeria monocytogenes serotype 4b (strain F2365).